A 279-amino-acid polypeptide reads, in one-letter code: MAFQGTSRTLTQQSSAATSDELQKLLFSPEAIKKMATECDLGRHHWMRADNAISVRPLVPEVTHGRIASFFKSGYDAGELSSKGYMSVTQVLCAVTRTVSTDAEGSLRIYLADLGDKELSPIDRQCVTLHNHDLPALVSFQPTYDCPMESVGNRKRCFAVVIERHGYIEYTGTTASVCSNWQARFSSKNNNYTHIAAGKTLVLPFNRLAEQTKPSAVARLLKSQLNNIESSQYVLTDAKINQNARSESEEIIVESPPIVIGSSSASRSEAFRPQVVNGL.

It belongs to the cucumovirus movement protein family.

The protein localises to the host cell junction. It is found in the host plasmodesma. Its function is as follows. Transports viral genome to neighboring plant cells directly through plasmosdesmata, without any budding. The movement protein allows efficient cell to cell propagation, by bypassing the host cell wall barrier. Acts by forming a tubular structure at the host plasmodesmata, enlarging it enough to allow free passage of virion capsids. This Cucumber mosaic virus (strain Ixora) (CMV) protein is Movement protein.